A 210-amino-acid chain; its full sequence is MRLIVGLGNPGQRYARNRHNIGFMAVDEIARVHRAAPFRRRFQGEAAEVMLGSERAILLKPQTFMNESGRSVGEAQRFFKIPLSDVIVLHDELDLAPAKLRVKLGGGNAGHNGLRSITALCGNDYRRVRLGIGHPGDKALVHAYVLNDFAKSEEPWVEDLCRATADHAPLLAAGEDASFQNKVHLAMAGRGWDAVKTPAEAGKAKARDAN.

Y14 serves as a coordination point for tRNA. H19 acts as the Proton acceptor in catalysis. The tRNA site is built by F64, N66, and N112.

The protein belongs to the PTH family. Monomer.

Its subcellular location is the cytoplasm. The enzyme catalyses an N-acyl-L-alpha-aminoacyl-tRNA + H2O = an N-acyl-L-amino acid + a tRNA + H(+). Its function is as follows. Hydrolyzes ribosome-free peptidyl-tRNAs (with 1 or more amino acids incorporated), which drop off the ribosome during protein synthesis, or as a result of ribosome stalling. In terms of biological role, catalyzes the release of premature peptidyl moieties from peptidyl-tRNA molecules trapped in stalled 50S ribosomal subunits, and thus maintains levels of free tRNAs and 50S ribosomes. This Methylorubrum populi (strain ATCC BAA-705 / NCIMB 13946 / BJ001) (Methylobacterium populi) protein is Peptidyl-tRNA hydrolase.